A 247-amino-acid chain; its full sequence is MLPSQEASKLYHEHYMRNSRAIGVLWAIFTICFAIINVVVFIQPYWVGDSVSTPKPGYFGLFHYCVGSGLAGRELTCRGSFTDFSTIPSSAFKAAAFFVLLSMVLILGCITCFALFFFCNTATVYKICAWMQLLAALCLVLGCMIFPDGWDAETIRDMCGAKTGKYSLGDCSVRWAYILAIIGILNALILSFLAFVLGNRQTDLLQEELKQENKDFVGTTVSSVLRPGGDVSGWGVLPCPVAHTQGP.

Helical transmembrane passes span 22–42, 97–117, 127–147, and 178–198; these read IGVL…VVFI, FFVL…ALFF, ICAW…MIFP, and ILAI…FVLG.

Belongs to the LHFP family. In terms of assembly, interacts with GABA(A) receptor subunits. Interacts with GABRB3. Interacts with GABRA2. Interacts with GABRG2. Interacts with GABRA1. Identified in a complex of 720 kDa composed of LHFPL4, NLGN2, GABRA1, GABRB2, GABRG2 and GABRB3. Interacts with NLGN2; leading to mutual regulation of protein level and synaptic clustering. As to expression, highly expressed in the brain, including the cortex, hippocampus, midbrain, olfactory bulb pona plus medulla (at protein level). Expressed in the in the cerebellar granular layer and in granular layer. Colocalized with GPHN at inhibitory synapses. Weakly expressed in heart, testis, lung, intestine, vagina, ovary and uterus.

It is found in the cell projection. Its subcellular location is the dendrite. It localises to the postsynaptic cell membrane. In terms of biological role, plays a role in the regulation of inhibitory synapse formation and function by being involved in maintening gamma-aminobutyric acid receptors (GABAARs) clustering and their associated scaffold proteins at inhibitory synaptic sites. Acts in concert with NLGN2 to recruit or stabilize GABAARs. The sequence is that of LHFPL tetraspan subfamily member 4 protein from Mus musculus (Mouse).